A 399-amino-acid chain; its full sequence is Argininosuccinate synthase (399 aa).

ATP is bound at residue A9–S17. L-citrulline is bound at residue Y85. G115 contacts ATP. Positions 117, 121, and 122 each coordinate L-aspartate. N121 serves as a coordination point for L-citrulline. R125, S173, E258, and Y270 together coordinate L-citrulline.

It belongs to the argininosuccinate synthase family. Type 1 subfamily. Homotetramer.

The protein localises to the cytoplasm. The enzyme catalyses L-citrulline + L-aspartate + ATP = 2-(N(omega)-L-arginino)succinate + AMP + diphosphate + H(+). The protein operates within amino-acid biosynthesis; L-arginine biosynthesis; L-arginine from L-ornithine and carbamoyl phosphate: step 2/3. The chain is Argininosuccinate synthase from Streptococcus gordonii (strain Challis / ATCC 35105 / BCRC 15272 / CH1 / DL1 / V288).